Reading from the N-terminus, the 930-residue chain is Pyruvate dehydrogenase E1 component (930 aa).

Residues 1–10 (MTTDFARHDL) show a composition bias toward basic and acidic residues. A disordered region spans residues 1–21 (MTTDFARHDLAQNSNSASEPD). An Isoglutamyl lysine isopeptide (Lys-Gln) (interchain with Q-Cter in protein Pup) cross-link involves residue Lys-375.

As to quaternary structure, homodimer. Part of the PDH complex, consisting of multiple copies of AceE (E1), DlaT (E2) and Lpd (E3). It depends on Mg(2+) as a cofactor. Thiamine diphosphate is required as a cofactor.

The enzyme catalyses N(6)-[(R)-lipoyl]-L-lysyl-[protein] + pyruvate + H(+) = N(6)-[(R)-S(8)-acetyldihydrolipoyl]-L-lysyl-[protein] + CO2. In terms of biological role, component of the pyruvate dehydrogenase (PDH) complex, that catalyzes the overall conversion of pyruvate to acetyl-CoA and CO(2). AceE has reductase activity with pyruvate but does not react with 2-oxoglutarate. This chain is Pyruvate dehydrogenase E1 component (aceE), found in Mycobacterium tuberculosis (strain ATCC 25618 / H37Rv).